Reading from the N-terminus, the 330-residue chain is MTTKSYILGFGSHAPERILTNTDMEAFVDTTDEWITTRTGIKQRHIAAEGETTSDLGAKAALQALANAGLHADALTHILVATCTPDAMCPSTACLIEHKLGVSGLMALDLNAACSGFLYALNMAQGIVALTPDAKVLVVAAEVLSRRINWNDRSTCVLFGDGAGAVIVGSHPNEGRAVEVADSLLSSDGALGDLLLISGGGTSVPYKHGQPVGDEFFVRMEGREIFKHAVRSMARVCEELLERNGIAREDVDMLLPHQANLRIIEAVGKKLGIPADKVFVNLQEYGNTSAASVPLALADADSKNLLPPGRTVLLTTFGGGFTWGAVLLRT.

Catalysis depends on residues Cys-114 and His-257. Residues 258 to 262 are ACP-binding; it reads QANLR. Asn-287 is a catalytic residue.

The protein belongs to the thiolase-like superfamily. FabH family. As to quaternary structure, homodimer.

The protein resides in the cytoplasm. The enzyme catalyses malonyl-[ACP] + acetyl-CoA + H(+) = 3-oxobutanoyl-[ACP] + CO2 + CoA. It functions in the pathway lipid metabolism; fatty acid biosynthesis. In terms of biological role, catalyzes the condensation reaction of fatty acid synthesis by the addition to an acyl acceptor of two carbons from malonyl-ACP. Catalyzes the first condensation reaction which initiates fatty acid synthesis and may therefore play a role in governing the total rate of fatty acid production. Possesses both acetoacetyl-ACP synthase and acetyl transacylase activities. Its substrate specificity determines the biosynthesis of branched-chain and/or straight-chain of fatty acids. This Oleidesulfovibrio alaskensis (strain ATCC BAA-1058 / DSM 17464 / G20) (Desulfovibrio alaskensis) protein is Beta-ketoacyl-[acyl-carrier-protein] synthase III.